We begin with the raw amino-acid sequence, 153 residues long: UPF0178 protein Sfum_1097 (153 aa).

This sequence belongs to the UPF0178 family.

This is UPF0178 protein Sfum_1097 from Syntrophobacter fumaroxidans (strain DSM 10017 / MPOB).